Reading from the N-terminus, the 388-residue chain is Mannitol-1-phosphate 5-dehydrogenase (388 aa).

An NAD(+)-binding site is contributed by 3–14 (ALHFGAGNIGRG).

It belongs to the mannitol dehydrogenase family.

The catalysed reaction is D-mannitol 1-phosphate + NAD(+) = beta-D-fructose 6-phosphate + NADH + H(+). The sequence is that of Mannitol-1-phosphate 5-dehydrogenase from Buchnera aphidicola subsp. Schizaphis graminum (strain Sg).